The primary structure comprises 328 residues: Formimidoylglutamase (328 aa).

Positions 133, 159, 161, 163, 253, and 255 each coordinate Mn(2+).

It belongs to the arginase family. Mn(2+) serves as cofactor.

It carries out the reaction N-formimidoyl-L-glutamate + H2O = formamide + L-glutamate. It functions in the pathway amino-acid degradation; L-histidine degradation into L-glutamate; L-glutamate from N-formimidoyl-L-glutamate (hydrolase route): step 1/1. Its function is as follows. Catalyzes the conversion of N-formimidoyl-L-glutamate to L-glutamate and formamide. This Streptococcus pyogenes serotype M18 (strain MGAS8232) protein is Formimidoylglutamase.